A 688-amino-acid polypeptide reads, in one-letter code: DNA ligase (688 aa).

Residues 42–46 (DAEYD), 91–92 (SL), and glutamate 128 contribute to the NAD(+) site. Lysine 130 serves as the catalytic N6-AMP-lysine intermediate. The NAD(+) site is built by arginine 151, glutamate 188, lysine 305, and lysine 329. Zn(2+) contacts are provided by cysteine 423, cysteine 426, cysteine 441, and cysteine 447. Residues 608–688 (APQGVLAGKT…GMRKLLEGQL (81 aa)) enclose the BRCT domain.

This sequence belongs to the NAD-dependent DNA ligase family. LigA subfamily. Requires Mg(2+) as cofactor. Mn(2+) serves as cofactor.

The enzyme catalyses NAD(+) + (deoxyribonucleotide)n-3'-hydroxyl + 5'-phospho-(deoxyribonucleotide)m = (deoxyribonucleotide)n+m + AMP + beta-nicotinamide D-nucleotide.. Functionally, DNA ligase that catalyzes the formation of phosphodiester linkages between 5'-phosphoryl and 3'-hydroxyl groups in double-stranded DNA using NAD as a coenzyme and as the energy source for the reaction. It is essential for DNA replication and repair of damaged DNA. The sequence is that of DNA ligase from Paraburkholderia phytofirmans (strain DSM 17436 / LMG 22146 / PsJN) (Burkholderia phytofirmans).